The primary structure comprises 150 residues: uncharacterized protein (150 aa).

In terms of domain architecture, HTH asnC-type spans 5-66; that stretch reads LDKVDRRLLE…KPNYKKLNLG (62 aa). The H-T-H motif DNA-binding region spans 24–43; it reads IATLSKKLGIPRTTVHYRIK.

This is an uncharacterized protein from Pyrococcus horikoshii (strain ATCC 700860 / DSM 12428 / JCM 9974 / NBRC 100139 / OT-3).